A 205-amino-acid chain; its full sequence is Protein N-terminal glutamine amidohydrolase (205 aa).

Catalysis depends on residues Cys-20, His-74, and Asp-90.

The protein belongs to the NTAQ1 family. Monomer.

The enzyme catalyses N-terminal L-glutaminyl-[protein] + H2O = N-terminal L-glutamyl-[protein] + NH4(+). In terms of biological role, mediates the side-chain deamidation of N-terminal glutamine residues to glutamate, an important step in N-end rule pathway of protein degradation. Conversion of the resulting N-terminal glutamine to glutamate renders the protein susceptible to arginylation, polyubiquitination and degradation as specified by the N-end rule. Does not act on substrates with internal or C-terminal glutamine and does not act on non-glutamine residues in any position. This chain is Protein N-terminal glutamine amidohydrolase (tun), found in Drosophila ananassae (Fruit fly).